Consider the following 1663-residue polypeptide: Cortactin-binding protein 2 (1663 aa).

The disordered stretch occupies residues 1 to 26; that stretch reads MATDGASCEPDLSRAPEDAAGATAEA. The stretch at 119 to 275 forms a coiled coil; the sequence is RKMQERMSAQ…IEQLKKGGDS (157 aa). Disordered regions lie at residues 355–440 and 454–478; these read SIDR…LHPG and GNAN…SPTS. Residues 386-403 show a composition bias toward low complexity; sequence PSTDSTPDPTSSTPLLSS. Positions 404 to 422 are enriched in polar residues; that stretch reads NAAPPTAQTPGITPQNSQA. Arg-498 is modified (asymmetric dimethylarginine). Positions 499–614 are disordered; it reads FTGPQAGAPP…KSSSPQLPPK (116 aa). Over residues 583 to 593 the composition is skewed to polar residues; that stretch reads TVASPPSSLPQ. 5 ANK repeats span residues 709–739, 743–772, 776–805, 809–838, and 842–871; these read GRPT…DINY, DGHS…QVNA, NGFT…NINH, GGQT…DRCV, and DGWT…PAHG. A disordered region spans residues 872–897; sequence NSFSEEESESGVFDLDGEEESPEGKS. Positions 875–892 are enriched in acidic residues; it reads SEEESESGVFDLDGEEES. The stretch at 912–942 is one ANK 6 repeat; sequence EGWTAAHIAAAKGFKNCLEILCRHGGLEPER. Positions 1446–1482 are disordered; the sequence is SKKKGESGAWRKVNTSPRRKSGRFSLPTWNKPDLSTE. Residue Ser-1524 is modified to Phosphoserine. The tract at residues 1617–1663 is disordered; it reads RSKVTQCSQNTKSSSSSSNTRQIEINNNSKEENWNLHKNEHLEKANK. 2 stretches are compositionally biased toward polar residues: residues 1619–1628 and 1635–1644; these read KVTQCSQNTK and NTRQIEINNN. Residues 1645 to 1663 show a composition bias toward basic and acidic residues; sequence SKEENWNLHKNEHLEKANK.

Interacts with CTTN/cortactin SH3 domain. Interacts with STRN, STRN4/zinedin and MOB4/phocein; this interactions mediate the association with the STRIPAK core complex and may regulate dendritic spine distribution of the STRIPAK complex in hippocampal neurons. Activation of glutamate receptors weakens the interaction with STRN and STRN4.

It localises to the cytoplasm. It is found in the cell cortex. The protein localises to the cell projection. The protein resides in the dendritic spine. Regulates the dendritic spine distribution of CTTN/cortactin in hippocampal neurons, and thus controls dendritic spinogenesis and dendritic spine maintenance. Associates with the striatin-interacting phosphatase and kinase (STRIPAK) core complex to regulate dendritic spine distribution of the STRIPAK complex in hippocampal neurons. The chain is Cortactin-binding protein 2 (CTTNBP2) from Plecturocebus moloch (Dusky titi monkey).